Reading from the N-terminus, the 40-residue chain is MADTTGRIPLWVIGTVAGILVIGLIGIFFYGSYSGLGSSL.

The chain crosses the membrane as a helical span at residues 8–28 (IPLWVIGTVAGILVIGLIGIF).

This sequence belongs to the PsbJ family. In terms of assembly, PSII is composed of 1 copy each of membrane proteins PsbA, PsbB, PsbC, PsbD, PsbE, PsbF, PsbH, PsbI, PsbJ, PsbK, PsbL, PsbM, PsbT, PsbX, PsbY, PsbZ, Psb30/Ycf12, at least 3 peripheral proteins of the oxygen-evolving complex and a large number of cofactors. It forms dimeric complexes.

The protein localises to the plastid. It is found in the chloroplast thylakoid membrane. Functionally, one of the components of the core complex of photosystem II (PSII). PSII is a light-driven water:plastoquinone oxidoreductase that uses light energy to abstract electrons from H(2)O, generating O(2) and a proton gradient subsequently used for ATP formation. It consists of a core antenna complex that captures photons, and an electron transfer chain that converts photonic excitation into a charge separation. The sequence is that of Photosystem II reaction center protein J from Lepidium virginicum (Virginia pepperweed).